The chain runs to 395 residues: GPI-anchor transamidase (395 aa).

The signal sequence occupies residues 1–27 (MVGTWFLCRGFTTLAGLLLLPFGSLAA). Residues 28 to 368 (SQIEDQAEQF…PKLKDWHPPG (341 aa)) are Lumenal-facing. Ca(2+) contacts are provided by Asp-79, Ile-82, Glu-118, and Asp-120. The Proton donor role is filled by His-164. Cys-206 (nucleophile; acyl-thioester intermediate) is an active-site residue. 3 residues coordinate a protein: Cys-206, Ser-232, and Ser-234. Residues 231–236 (DSLSHQ) are autoinhibitory loop. A disulfide bond links Cys-275 and Cys-280. The chain crosses the membrane as a helical span at residues 369–385 (GFILGLWALIIMVFFKT). The Cytoplasmic segment spans residues 386–395 (YGIKHMKFIF).

The protein belongs to the peptidase C13 family. As to quaternary structure, heteropentamer. Part of the GPI-anchor transamidase complex, consisting of PIGK, PIGT, PIGS, PIGU and GAA1. Interacts with GPAA1. Interacts with PIGT; this interaction, via a disulfide link, stabilizes the expression of GAA1 and PIGK and links them to PIGS. Post-translationally, the disulfide bond between PIGK/GPI8 and PIGT is important for normal enzyme activity.

It localises to the endoplasmic reticulum membrane. The protein operates within glycolipid biosynthesis; glycosylphosphatidylinositol-anchor biosynthesis. In the absence of proproteins substrates, exists in an inactive state with a disrupted catalytic site by an autoinhibitory loop. The binding of proprotein substrates, particularly the CSP region, to GPI-T triggers concerted conformational changes that alleviate the inhibition by the autoinhibitory loop. Meanwhile, proprotein residues near the omega- site induce the formation of a catalytic cleft for catalysis, following which the products are released and GPI-T reverts to the inactive state. Its function is as follows. Catalytic subunit of the glycosylphosphatidylinositol-anchor (GPI-anchor) transamidase (GPI-T) complex that catalyzes the formation of the linkage between a proprotein and a GPI-anchor and participates in GPI anchored protein biosynthesis. Recognizes diverse proproteins at a C-terminal signal peptide (CSP) region that lacks consensus sequence and replaces it with a GPI-anchor via a transamidation reaction. Transamidation catalysis reaction follows a two-phase mechanism. In the acyl-enzyme phase, the carbonyl group of the proproteins's omega-site undergoes a nucleophilic attack forming an enzyme-substrate thioester bond. Followed by a general acid catalysis that allows CSP releasing, regenerating the carbonyl, and forming the acyl-enzyme intermediate. In the GPI-anchor attachment phase, the amino group of the GPI-anchor's ethanolamine phosphate, the one on third mannose (EtNP3), mediates a nucleophilic attack on the carbonyl of the acyl-enzyme intermediate, replacing the CSP, allowing GPI-anchor attachment to the omega-residue, therefore forming the product and freeing the enzyme. The sequence is that of GPI-anchor transamidase from Sus scrofa (Pig).